The sequence spans 1367 residues: Insulin-like growth factor 1 receptor (1367 aa).

Positions 1–30 (MKSGSGGGSPTSLWGLLFLSAALSLWPTSG) are cleaved as a signal peptide. The cysteines at positions 33 and 52 are disulfide-linked. Residues asparagine 51, asparagine 102, and asparagine 135 are each glycosylated (N-linked (GlcNAc...) asparagine). 13 disulfide bridges follow: cysteine 150-cysteine 178, cysteine 182-cysteine 205, cysteine 192-cysteine 211, cysteine 215-cysteine 224, cysteine 219-cysteine 230, cysteine 231-cysteine 239, cysteine 235-cysteine 248, cysteine 251-cysteine 260, cysteine 264-cysteine 276, cysteine 282-cysteine 303, cysteine 307-cysteine 321, cysteine 324-cysteine 328, and cysteine 332-cysteine 353. N-linked (GlcNAc...) asparagine glycosylation occurs at asparagine 244. N-linked (GlcNAc...) asparagine glycosylation occurs at asparagine 314. 2 N-linked (GlcNAc...) asparagine glycosylation sites follow: asparagine 417 and asparagine 438. A disulfide bridge connects residues cysteine 455 and cysteine 488. Fibronectin type-III domains are found at residues 491 to 609 (DVLH…TNAS), 610 to 708 (VPSI…TEAE), 735 to 828 (PERK…TMPA), and 834 to 927 (IPGP…VQAK). N-linked (GlcNAc...) asparagine glycans are attached at residues asparagine 534, asparagine 607, asparagine 622, asparagine 640, asparagine 747, asparagine 756, asparagine 764, asparagine 900, and asparagine 913. Over 741 to 935 (DVMQVANTTM…AKTGYENFIH (195 aa)) the chain is Extracellular. Residues 936-959 (LIIALPVAVLLIVGGLVIMLYVFH) traverse the membrane as a helical segment. At 960–1367 (RKRNNSRLGN…ALPLPQSSTC (408 aa)) the chain is on the cytoplasmic side. An IRS1- and SHC1-binding motif is present at residues 977–980 (NPEY). At tyrosine 980 the chain carries Phosphotyrosine. Residues 999–1274 (ITMSRELGQG…SIKEEMEPGF (276 aa)) form the Protein kinase domain. ATP contacts are provided by residues 1005–1013 (LGQGSFGMV) and lysine 1033. Aspartate 1135 acts as the Proton acceptor in catalysis. 3 positions are modified to phosphotyrosine; by autocatalysis: tyrosine 1161, tyrosine 1165, and tyrosine 1166. Residues lysine 1168 and lysine 1171 each participate in a glycyl lysine isopeptide (Lys-Gly) (interchain with G-Cter in ubiquitin) cross-link. Serine 1278 is modified (phosphoserine; by GSK3-beta). The residue at position 1282 (serine 1282) is a Phosphoserine. Residues 1288 to 1367 (PEPEELDLEP…ALPLPQSSTC (80 aa)) form a disordered region. Positions 1290 to 1299 (PEELDLEPEN) are enriched in acidic residues. Positions 1300-1316 (MESVPLDPSASSSSLPL) are enriched in low complexity. Residues 1317–1326 (PDRHSGHKAE) are compositionally biased toward basic and acidic residues.

The protein belongs to the protein kinase superfamily. Tyr protein kinase family. Insulin receptor subfamily. In terms of assembly, tetramer of 2 alpha and 2 beta chains linked by disulfide bonds. The alpha chains contribute to the formation of the ligand-binding domain, while the beta chain carries the kinase domain. Interacts with PIK3R1 and with the PTB/PID domains of IRS1 and SHC1 in vitro when autophosphorylated on tyrosine residues. Forms a hybrid receptor with INSR, the hybrid is a tetramer consisting of 1 alpha chain and 1 beta chain of INSR and 1 alpha chain and 1 beta chain of IGF1R. Interacts with ARRB1 and ARRB2. Interacts with GRB10. Interacts with RACK1. Interacts with SOCS1, SOCS2 and SOCS3. Interacts with 14-3-3 proteins. Interacts with NMD2. Interacts with MAP3K5. Interacts with STAT3. Found in a ternary complex with IGF1 and ITGAV:ITGB3 or ITGA6:ITGB4. Interacts (nascent precursor form) with ZFAND2B. (Microbial infection) Interacts with human respiratory syncytial virus (HRSV) fusion glycoprotein F1/F2 heterodimer. Post-translationally, autophosphorylated on tyrosine residues in response to ligand binding. Autophosphorylation occurs in trans, i.e. one subunit of the dimeric receptor phosphorylates tyrosine residues on the other subunit. Autophosphorylation occurs in a sequential manner; Tyr-1165 is predominantly phosphorylated first, followed by phosphorylation of Tyr-1161 and Tyr-1166. While every single phosphorylation increases kinase activity, all three tyrosine residues in the kinase activation loop (Tyr-1165, Tyr-1161 and Tyr-1166) have to be phosphorylated for optimal activity. Can be autophosphorylated at additional tyrosine residues (in vitro). Autophosphorylated is followed by phosphorylation of juxtamembrane tyrosines and C-terminal serines. May also be phosphorylated at Tyr-1161 and Tyr-1166 by mTORC2. Phosphorylation of Tyr-980 is required for IRS1- and SHC1-binding. Phosphorylation of Ser-1278 by GSK-3beta restrains kinase activity and promotes cell surface expression, it requires a priming phosphorylation at Ser-1282. Dephosphorylated by PTPN1. Polyubiquitinated at Lys-1168 and Lys-1171 through both 'Lys-48' and 'Lys-29' linkages, promoting receptor endocytosis and subsequent degradation by the proteasome. Ubiquitination is facilitated by pre-existing phosphorylation. In terms of processing, sumoylated with SUMO1. Post-translationally, controlled by regulated intramembrane proteolysis (RIP). Undergoes metalloprotease-dependent constitutive ectodomain shedding to produce a membrane-anchored 52 kDa C-Terminal fragment which is further processed by presenilin gamma-secretase to yield an intracellular 50 kDa fragment. In terms of tissue distribution, found as a hybrid receptor with INSR in muscle, heart, kidney, adipose tissue, skeletal muscle, hepatoma, fibroblasts, spleen and placenta (at protein level). Expressed in a variety of tissues. Overexpressed in tumors, including melanomas, cancers of the colon, pancreas prostate and kidney.

The protein resides in the cell membrane. The enzyme catalyses L-tyrosyl-[protein] + ATP = O-phospho-L-tyrosyl-[protein] + ADP + H(+). Its activity is regulated as follows. Activated by autophosphorylation at Tyr-1165, Tyr-1161 and Tyr-1166 on the kinase activation loop; phosphorylation at all three tyrosine residues is required for optimal kinase activity. Inhibited by MSC1609119A-1, BMS-754807, PQIP, benzimidazole pyridinone, isoquinolinedione, bis-azaindole, 3-cyanoquinoline, 2,4-bis-arylamino-1,3-pyrimidine, pyrrolopyrimidine, pyrrole-5-carboxaldehyde, picropodophyllin (PPP), tyrphostin derivatives. While most inhibitors bind to the ATP binding pocket, MSC1609119A-1 functions as allosteric inhibitor and binds close to the DFG motif and the activation loop. Its function is as follows. Receptor tyrosine kinase which mediates actions of insulin-like growth factor 1 (IGF1). Binds IGF1 with high affinity and IGF2 and insulin (INS) with a lower affinity. The activated IGF1R is involved in cell growth and survival control. IGF1R is crucial for tumor transformation and survival of malignant cell. Ligand binding activates the receptor kinase, leading to receptor autophosphorylation, and tyrosines phosphorylation of multiple substrates, that function as signaling adapter proteins including, the insulin-receptor substrates (IRS1/2), Shc and 14-3-3 proteins. Phosphorylation of IRSs proteins lead to the activation of two main signaling pathways: the PI3K-AKT/PKB pathway and the Ras-MAPK pathway. The result of activating the MAPK pathway is increased cellular proliferation, whereas activating the PI3K pathway inhibits apoptosis and stimulates protein synthesis. Phosphorylated IRS1 can activate the 85 kDa regulatory subunit of PI3K (PIK3R1), leading to activation of several downstream substrates, including protein AKT/PKB. AKT phosphorylation, in turn, enhances protein synthesis through mTOR activation and triggers the antiapoptotic effects of IGFIR through phosphorylation and inactivation of BAD. In parallel to PI3K-driven signaling, recruitment of Grb2/SOS by phosphorylated IRS1 or Shc leads to recruitment of Ras and activation of the ras-MAPK pathway. In addition to these two main signaling pathways IGF1R signals also through the Janus kinase/signal transducer and activator of transcription pathway (JAK/STAT). Phosphorylation of JAK proteins can lead to phosphorylation/activation of signal transducers and activators of transcription (STAT) proteins. In particular activation of STAT3, may be essential for the transforming activity of IGF1R. The JAK/STAT pathway activates gene transcription and may be responsible for the transforming activity. JNK kinases can also be activated by the IGF1R. IGF1 exerts inhibiting activities on JNK activation via phosphorylation and inhibition of MAP3K5/ASK1, which is able to directly associate with the IGF1R. In terms of biological role, when present in a hybrid receptor with INSR, binds IGF1. PubMed:12138094 shows that hybrid receptors composed of IGF1R and INSR isoform Long are activated with a high affinity by IGF1, with low affinity by IGF2 and not significantly activated by insulin, and that hybrid receptors composed of IGF1R and INSR isoform Short are activated by IGF1, IGF2 and insulin. In contrast, PubMed:16831875 shows that hybrid receptors composed of IGF1R and INSR isoform Long and hybrid receptors composed of IGF1R and INSR isoform Short have similar binding characteristics, both bind IGF1 and have a low affinity for insulin. The chain is Insulin-like growth factor 1 receptor (IGF1R) from Homo sapiens (Human).